An 890-amino-acid polypeptide reads, in one-letter code: MQTHEIRERFTNHFVNAGHTAVPSASLILDDPNLLFVNAGMVPFKPYFLGQQTPPFANGTATSIQKCVRTLDIEEVGITTRHNTFFQMAGNFSFGQYFKEGAITHAWTLLTNPVEEGGYGLDPERLWVTVYLDDDEAAEIWEKKIGVPAERIQRLGMADNYWSMGVPGPCGPCSEIYYDRGPKYGNEGGPAVDDSRYLEIWNLVFMEFERGEGTGKDSFEIIGELPKKNIDTGMGVERVACILQGVENVYETDLLRPVIDVAETLTGATYGRDNTADIRFRVIADHSRTGMMLILDGVTPGNEGRGYILRRLLRRIIRSARLLGATGETMEKFMNTIMDTMTPSYPEIAENRERILRVAITEERAFLKTLVSGTHLFEEAAASIKSSGSTTVAGAQAFALHDTYGFPIDLTLEMAAEAGLEVDVEGFESLMAEQRSRAKADSQAKKHGHADLSIYREWVDNHPTVFTGFEELESQSRVLGLLSDGTRINEAAEGQEVEVILDQSPLYAESGGQLGDRGRILMGDTVVDIQDVQKIGKKLWVHKAVVANGGLAVGDEVVAAVDKQWRHAARQAHTATHLIHAALRQVLGPTAVQAGSMNKPGYLRFDFNYTDQLTPEQLNQIQAITNEAVDTDWAVNTIETSLEEARAMGAMALFGENYGDLVRVVEIGGPFSMELCGGTHVEHSSQIGPVALLGESSIGSGVRRIEAYSGLNSFNYLSKERALAESLSSILKTPSTDLPERISQLLDKLKAAEKEIATLHRRELAAKSEEFITGAEEINGIRAVMVRVQDGLDAGDLRTLATTLRDKLSNGEGLVVVASRSEDGTKVPFVAGATKQAVARGVHSGNLIKLIGSYIDGRGGGKPDMAQGSGSDIDGLDAAFNAVRAELENL.

His-573, His-577, Cys-676, and His-680 together coordinate Zn(2+).

The protein belongs to the class-II aminoacyl-tRNA synthetase family. The cofactor is Zn(2+).

Its subcellular location is the cytoplasm. It catalyses the reaction tRNA(Ala) + L-alanine + ATP = L-alanyl-tRNA(Ala) + AMP + diphosphate. In terms of biological role, catalyzes the attachment of alanine to tRNA(Ala) in a two-step reaction: alanine is first activated by ATP to form Ala-AMP and then transferred to the acceptor end of tRNA(Ala). Also edits incorrectly charged Ser-tRNA(Ala) and Gly-tRNA(Ala) via its editing domain. The polypeptide is Alanine--tRNA ligase (Corynebacterium efficiens (strain DSM 44549 / YS-314 / AJ 12310 / JCM 11189 / NBRC 100395)).